A 357-amino-acid polypeptide reads, in one-letter code: Ribonuclease 3 (357 aa).

An RNase III domain is found at 6 to 155 (IKFIQDQIGY…ILGAIALDSN (150 aa)). E45 contacts Mg(2+). The active site involves D49. Residues D141 and E144 each coordinate Mg(2+). The active site involves E144. DRBM domains are found at residues 198-267 (PLHC…YLKD) and 285-355 (DSIG…FVLE).

This sequence belongs to the ribonuclease III family. Homodimer. Mg(2+) serves as cofactor.

The protein resides in the cytoplasm. The enzyme catalyses Endonucleolytic cleavage to 5'-phosphomonoester.. Digests double-stranded RNA. Involved in the processing of primary rRNA transcript to yield the immediate precursors to the large and small rRNAs (23S and 16S). Processes some mRNAs, and tRNAs when they are encoded in the rRNA operon. Processes pre-crRNA and tracrRNA of type II CRISPR loci if present in the organism. This chain is Ribonuclease 3 (rnc), found in Roseburia hominis (strain DSM 16839 / JCM 17582 / NCIMB 14029 / A2-183).